The sequence spans 377 residues: Chaperone protein DnaJ (377 aa).

The 65-residue stretch at 5-69 (EFYDRLGVSK…QKRSAYDQYG (65 aa)) folds into the J domain. The segment at 133-215 (GVEKDVSYHR…CHGTGHEKET (83 aa)) adopts a CR-type zinc-finger fold. Zn(2+) is bound by residues Cys-146, Cys-149, Cys-163, Cys-166, Cys-189, Cys-192, Cys-203, and Cys-206. CXXCXGXG motif repeat units follow at residues 146–153 (CHTCAGSG), 163–170 (CGRCHGSG), 189–196 (CDVCHGSG), and 203–210 (CQTCHGTG).

Belongs to the DnaJ family. Homodimer. Zn(2+) is required as a cofactor.

Its subcellular location is the cytoplasm. Participates actively in the response to hyperosmotic and heat shock by preventing the aggregation of stress-denatured proteins and by disaggregating proteins, also in an autonomous, DnaK-independent fashion. Unfolded proteins bind initially to DnaJ; upon interaction with the DnaJ-bound protein, DnaK hydrolyzes its bound ATP, resulting in the formation of a stable complex. GrpE releases ADP from DnaK; ATP binding to DnaK triggers the release of the substrate protein, thus completing the reaction cycle. Several rounds of ATP-dependent interactions between DnaJ, DnaK and GrpE are required for fully efficient folding. Also involved, together with DnaK and GrpE, in the DNA replication of plasmids through activation of initiation proteins. In Streptococcus uberis (strain ATCC BAA-854 / 0140J), this protein is Chaperone protein DnaJ.